Here is a 126-residue protein sequence, read N- to C-terminus: MAIVSGIEIPNNKIGLIALTYIFGIGISTSKRIFKDTGIDENIKVINWSDEDINKIRKYISSNIRIEGELRFEIQLDIKRMIEIGCYRGIRHRIGLPVRGQKTKNNCRTRKGKKKTVANKKKKINK.

The tract at residues 101–126 (QKTKNNCRTRKGKKKTVANKKKKINK) is disordered.

The protein belongs to the universal ribosomal protein uS13 family. Part of the 30S ribosomal subunit. Forms a loose heterodimer with protein S19. Forms two bridges to the 50S subunit in the 70S ribosome.

Its function is as follows. Located at the top of the head of the 30S subunit, it contacts several helices of the 16S rRNA. In the 70S ribosome it contacts the 23S rRNA (bridge B1a) and protein L5 of the 50S subunit (bridge B1b), connecting the 2 subunits; these bridges are implicated in subunit movement. Contacts the tRNAs in the A and P-sites. This is Small ribosomal subunit protein uS13 from Karelsulcia muelleri (strain GWSS) (Sulcia muelleri).